The primary structure comprises 359 residues: Cinnamyl alcohol dehydrogenase 8 (359 aa).

A Zn(2+)-binding site is contributed by Cys46. Ser48 is a binding site for NADP(+). His68, Glu69, Cys99, Cys102, Cys105, Cys113, and Cys162 together coordinate Zn(2+). NADP(+) contacts are provided by residues Thr166, 187–192 (GLGGLG), 210–215 (STSEKK), Thr250, Gly274, and 297–299 (SMI).

Belongs to the zinc-containing alcohol dehydrogenase family. In terms of assembly, homodimer. Zn(2+) is required as a cofactor. Expressed in the differentiation and elongation zones of primary and lateral roots. Expressed in the hypocotyl, cotyledon veins, vasculature of the first rosette leaves, hydathodes and trichomes. In stems, expressed in the vascular cambium and developing xylem tissues. Expressed in the style, anthers, stamen filaments, stigmatic regions in flowers, and abscission and style regions of siliques.

It catalyses the reaction (E)-cinnamyl alcohol + NADP(+) = (E)-cinnamaldehyde + NADPH + H(+). It participates in aromatic compound metabolism; phenylpropanoid biosynthesis. Involved in lignin biosynthesis. Catalyzes the final step specific for the production of lignin monomers. Catalyzes the NADPH-dependent reduction of coniferaldehyde, 5-hydroxyconiferaldehyde, sinapaldehyde, 4-coumaraldehyde and caffeyl aldehyde to their respective alcohols. The sequence is that of Cinnamyl alcohol dehydrogenase 8 (CAD8) from Arabidopsis thaliana (Mouse-ear cress).